The sequence spans 255 residues: Aliphatic sulfonates import ATP-binding protein SsuB (255 aa).

Residues 5–231 (IRVNEKAFGK…PRSRTSPVFQ (227 aa)) form the ABC transporter domain. Position 39–46 (39–46 (GPSGCGKS)) interacts with ATP.

The protein belongs to the ABC transporter superfamily. Aliphatic sulfonates importer (TC 3.A.1.17.2) family. As to quaternary structure, the complex is composed of two ATP-binding proteins (SsuB), two transmembrane proteins (SsuC) and a solute-binding protein (SsuA).

It localises to the cell membrane. The catalysed reaction is ATP + H2O + aliphatic sulfonate-[sulfonate-binding protein]Side 1 = ADP + phosphate + aliphatic sulfonateSide 2 + [sulfonate-binding protein]Side 1.. Part of the ABC transporter complex SsuABC involved in aliphatic sulfonates import. Responsible for energy coupling to the transport system. This chain is Aliphatic sulfonates import ATP-binding protein SsuB, found in Bacillus licheniformis (strain ATCC 14580 / DSM 13 / JCM 2505 / CCUG 7422 / NBRC 12200 / NCIMB 9375 / NCTC 10341 / NRRL NRS-1264 / Gibson 46).